The chain runs to 298 residues: tRNA pseudouridine synthase B (298 aa).

Residue Asp-45 is the Nucleophile of the active site.

It belongs to the pseudouridine synthase TruB family. Type 1 subfamily.

It carries out the reaction uridine(55) in tRNA = pseudouridine(55) in tRNA. Responsible for synthesis of pseudouridine from uracil-55 in the psi GC loop of transfer RNAs. This chain is tRNA pseudouridine synthase B, found in Thiobacillus denitrificans (strain ATCC 25259 / T1).